A 288-amino-acid polypeptide reads, in one-letter code: Beta-lactamase CARB-3 (288 aa).

An N-terminal signal peptide occupies residues 1–17 (MKFLLAFSLLIPSVVFA). Ser-65 (acyl-ester intermediate) is an active-site residue. The cysteines at positions 72 and 118 are disulfide-linked. 229–231 (RSG) is a substrate binding site.

It belongs to the class-A beta-lactamase family.

The enzyme catalyses a beta-lactam + H2O = a substituted beta-amino acid. Its function is as follows. Hydrolyzes both carbenicillin and oxacillin. The chain is Beta-lactamase CARB-3 (carB3) from Pseudomonas aeruginosa.